A 369-amino-acid polypeptide reads, in one-letter code: uncharacterized protein (369 aa).

Positions M1 to N35 are disordered. The segment covering Q17–H27 has biased composition (basic and acidic residues). 6 WD repeats span residues G83–T127, G130–L169, G174–L213, G220–T260, E263–I301, and G304–E341.

This is an uncharacterized protein from Schizosaccharomyces pombe (strain 972 / ATCC 24843) (Fission yeast).